The chain runs to 197 residues: Large ribosomal subunit protein bL25 (197 aa).

Belongs to the bacterial ribosomal protein bL25 family. CTC subfamily. Part of the 50S ribosomal subunit; part of the 5S rRNA/L5/L18/L25 subcomplex. Contacts the 5S rRNA. Binds to the 5S rRNA independently of L5 and L18.

Its function is as follows. This is one of the proteins that binds to the 5S RNA in the ribosome where it forms part of the central protuberance. The chain is Large ribosomal subunit protein bL25 from Lawsonia intracellularis (strain PHE/MN1-00).